The sequence spans 504 residues: uncharacterized protein (504 aa).

Residues 431–483 (GEAEKYRKLQDGDEDEEGTGKPEPKKARRKGFGGKFAPKHEEKVTRAVGVNSE) form a disordered region.

The protein belongs to the CBF/MAK21 family.

This is an uncharacterized protein from Caenorhabditis elegans.